The chain runs to 396 residues: Ornithine aminotransferase (396 aa).

Position 255 is an N6-(pyridoxal phosphate)lysine (lysine 255).

This sequence belongs to the class-III pyridoxal-phosphate-dependent aminotransferase family. OAT subfamily. Requires pyridoxal 5'-phosphate as cofactor.

Its subcellular location is the cytoplasm. It carries out the reaction a 2-oxocarboxylate + L-ornithine = L-glutamate 5-semialdehyde + an L-alpha-amino acid. The protein operates within amino-acid biosynthesis; L-proline biosynthesis; L-glutamate 5-semialdehyde from L-ornithine: step 1/1. Its function is as follows. Catalyzes the interconversion of ornithine to glutamate semialdehyde. The sequence is that of Ornithine aminotransferase from Staphylococcus epidermidis (strain ATCC 35984 / DSM 28319 / BCRC 17069 / CCUG 31568 / BM 3577 / RP62A).